Consider the following 392-residue polypeptide: Formate-dependent phosphoribosylglycinamide formyltransferase (392 aa).

Residues 15 to 16 (EL) and E75 each bind N(1)-(5-phospho-beta-D-ribosyl)glycinamide. Residues R107, K148, 153–158 (SSGKGQ), 188–191 (EEFL), and E196 each bind ATP. Residues 112-302 (DLASEELALL…EFELHLRAVL (191 aa)) enclose the ATP-grasp domain. Positions 261 and 273 each coordinate Mg(2+). N(1)-(5-phospho-beta-D-ribosyl)glycinamide contacts are provided by residues D280, K350, and 357–358 (RR).

Belongs to the PurK/PurT family. As to quaternary structure, homodimer.

The enzyme catalyses N(1)-(5-phospho-beta-D-ribosyl)glycinamide + formate + ATP = N(2)-formyl-N(1)-(5-phospho-beta-D-ribosyl)glycinamide + ADP + phosphate + H(+). The protein operates within purine metabolism; IMP biosynthesis via de novo pathway; N(2)-formyl-N(1)-(5-phospho-D-ribosyl)glycinamide from N(1)-(5-phospho-D-ribosyl)glycinamide (formate route): step 1/1. Involved in the de novo purine biosynthesis. Catalyzes the transfer of formate to 5-phospho-ribosyl-glycinamide (GAR), producing 5-phospho-ribosyl-N-formylglycinamide (FGAR). Formate is provided by PurU via hydrolysis of 10-formyl-tetrahydrofolate. The chain is Formate-dependent phosphoribosylglycinamide formyltransferase from Prochlorococcus marinus (strain MIT 9303).